The sequence spans 366 residues: NADH-quinone oxidoreductase subunit D (366 aa).

It belongs to the complex I 49 kDa subunit family. NDH-1 is composed of 14 different subunits. Subunits NuoB, C, D, E, F, and G constitute the peripheral sector of the complex.

It localises to the cell membrane. It carries out the reaction a quinone + NADH + 5 H(+)(in) = a quinol + NAD(+) + 4 H(+)(out). In terms of biological role, NDH-1 shuttles electrons from NADH, via FMN and iron-sulfur (Fe-S) centers, to quinones in the respiratory chain. The immediate electron acceptor for the enzyme in this species is believed to be a menaquinone. Couples the redox reaction to proton translocation (for every two electrons transferred, four hydrogen ions are translocated across the cytoplasmic membrane), and thus conserves the redox energy in a proton gradient. This Bacillus cereus (strain ZK / E33L) protein is NADH-quinone oxidoreductase subunit D.